The chain runs to 286 residues: 2-hydroxy-6-oxononadienedioate/2-hydroxy-6-oxononatrienedioate hydrolase (286 aa).

An AB hydrolase-1 domain is found at V36 to H271. Residue H265 is the Proton acceptor of the active site.

The protein belongs to the AB hydrolase superfamily. BphD family. In terms of assembly, homodimer.

The catalysed reaction is (2Z,4E)-2-hydroxy-6-oxonona-2,4-dienedioate + H2O = (2Z)-2-hydroxypenta-2,4-dienoate + succinate + H(+). It carries out the reaction (2Z,4E,7E)-2-hydroxy-6-oxonona-2,4,7-trienedioate + H2O = (2Z)-2-hydroxypenta-2,4-dienoate + fumarate + H(+). It participates in aromatic compound metabolism; 3-phenylpropanoate degradation. Functionally, catalyzes the cleavage of the C5-C6 bond of 2-hydroxy-6-oxononadienedioate, and probably also 2-hydroxy-6-oxononatrienedioate, a dienol ring fission product of the bacterial meta-cleavage pathway for degradation of phenylpropionic acid. The polypeptide is 2-hydroxy-6-oxononadienedioate/2-hydroxy-6-oxononatrienedioate hydrolase (mhpC) (Comamonas testosteroni (Pseudomonas testosteroni)).